A 373-amino-acid polypeptide reads, in one-letter code: Core trichothecene cluster (CTC) protein 14 (373 aa).

The protein belongs to the TRI14 family.

Its function is as follows. Part of the core gene cluster that mediates the biosynthesis of trichothecenes, a very large family of chemically related bicyclic sesquiterpene compounds acting as mycotoxins, including T2-toxin. The biosynthesis of trichothecenes begins with the cyclization of farnesyl diphosphate to trichodiene and is catalyzed by the trichodiene synthase TRI5. Trichodiene undergoes a series of oxygenations catalyzed by the cytochrome P450 monooxygenase TRI4. TRI4 controls the addition of four oxygens at C-2, C-3, C-11, and the C-12, C-13-epoxide to form the intermediate isotrichotriol. Isotrichotriol then undergoes a non-enzymatic isomerization and cyclization to form isotrichodermol. During this process, the oxygen at the C-2 position becomes the pyran ring oxygen and the hydroxyl group at C-11 is lost. More complex type A trichothecenes are built by modifying isotrichodermol through a series of paired hydroxylation and acetylation or acylation steps. Isotrichodermol is converted to isotrichodermin by the acetyltransferase TRI101. TRI101 encodes a C-3 transacetylase that acts as a self-protection or resistance factor during biosynthesis and that the presence of a free C-3 hydroxyl group is a key component of Fusarium trichothecene phytotoxicity. A second hydroxyl group is added to C-15 by the trichothecene C-15 hydroxylase TRI11, producing 15-decalonectrin, which is then acetylated by TRI3, producing calonectrin. A third hydroxyl group is added at C-4 by the cytochrome P450 monooxygenase TRI13, converting calonectrin to 3,15-diacetoxyspirpenol, which is subsequently acetylated bythe acetyltransferase TRI7. A fourth hydroxyl group is added to C-8 by the cytochrome P450 monooxygenase TRI1, followed by the addition of an isovaleryl moiety by TRI16. Finally, the acetyl group is removed from the C-3 position by the trichothecene C-3 esterase TRI8 to produce T-2 toxin. The chain is Core trichothecene cluster (CTC) protein 14 from Fusarium sporotrichioides.